Here is a 242-residue protein sequence, read N- to C-terminus: Acetoacetyl-CoA reductase (242 aa).

Residues 12–14 and 82–86 each bind NADP(+); these read RGI and NAGIT. Substrate-binding positions include aspartate 88 and 141 to 144; that span reads QAGQ. The Proton acceptor role is filled by tyrosine 147. 177 to 180 contacts NADP(+); that stretch reads PGYI. Residue 178–179 participates in substrate binding; that stretch reads GY.

It belongs to the short-chain dehydrogenases/reductases (SDR) family.

It is found in the cytoplasm. It catalyses the reaction a (3R)-3-hydroxyacyl-CoA + NADP(+) = a 3-oxoacyl-CoA + NADPH + H(+). It functions in the pathway biopolymer metabolism; poly-(R)-3-hydroxybutanoate biosynthesis. The chain is Acetoacetyl-CoA reductase (phaB) from Paracoccus denitrificans.